The sequence spans 400 residues: Integumentary mucin A.1 (400 aa).

The signal sequence occupies residues 1–20; the sequence is MKHIILCIHFLLMVVGLGQA. P-type domains follow at residues 21–64 and 72–115; these read QDCS…FYNA and LECS…YART. 3 disulfides stabilise this stretch: Cys-23/Cys-49, Cys-33/Cys-48, and Cys-43/Cys-60. The N-linked (GlcNAc...) asparagine glycan is linked to Asn-63. Disulfide bonds link Cys-74-Cys-100, Cys-84-Cys-99, and Cys-94-Cys-111. Composition is skewed to low complexity over residues 122–264 and 272–299; these read PDTT…DTTP and ETTT…ETTT. The disordered stretch occupies residues 122–302; sequence PDTTTASTTA…TTTETTTAPP (181 aa). 14 tandem repeats follow at residues 127–135, 136–144, 145–153, 154–162, 163–171, 172–180, 181–189, 190–198, 199–207, 208–216, 217–225, 226–234, 235–243, and 244–252. The tract at residues 127–261 is 15 X 9 AA approximate tandem repeats of [AV]-[SP]-T-T-[AP]-E-T-T-T; it reads ASTTAETTTV…TEPTTTPTTD (135 aa). One copy of the 1-15; approximate repeat lies at 253-261; sequence EPTTTPTTD. 7 consecutive repeat copies span residues 272 to 275, 276 to 279, 280 to 283, 284 to 287, 288 to 291, 292 to 295, and 296 to 299. The interval 272–299 is 7 X 4 AA repeats of E-T-T-T; the sequence is ETTTETTTETTTETTTETTTETTTETTT. P-type domains lie at 298-343 and 351-394; these read TTAP…FYTE and AECT…FEKA. 5 cysteine pairs are disulfide-bonded: Cys-312–Cys-327, Cys-322–Cys-339, Cys-353–Cys-379, Cys-363–Cys-378, and Cys-373–Cys-390.

Extensively O-glycosylated. Consist of about 70% carbohydrate and 30% protein. As to expression, expressed and stored exclusively in mature mucous glands of the skin.

The protein resides in the secreted. Its function is as follows. Could be involved in defense against microbial infections. Protects the epithelia from external environment. In Xenopus laevis (African clawed frog), this protein is Integumentary mucin A.1.